A 584-amino-acid polypeptide reads, in one-letter code: Extracellular serine/threonine protein kinase FAM20C (584 aa).

The Cytoplasmic portion of the chain corresponds to 1-10; the sequence is MKMMLVRRFR. The propeptide occupies 1–92; sequence MKMMLVRRFR…PNKHTLRILQ (92 aa). Residues 11 to 31 traverse the membrane as a helical; Signal-anchor for type II membrane protein segment; the sequence is VLILMVFLVACALHIALDLLP. At 32–584 the chain is on the lumenal side; sequence RLERRGARPS…DTEHRAASAR (553 aa). Disordered stretches follow at residues 62–81 and 94–159; these read QVRGRPGEPPAASSAAGDAG and FSSD…GDAS. 2 stretches are compositionally biased toward low complexity: residues 71–81 and 95–112; these read PAASSAAGDAG and SSDPSSNLSSHSLEKLPP. Asn-101 carries N-linked (GlcNAc...) asparagine glycosylation. At Ser-106 the chain carries Phosphoserine. Over residues 116 to 149 the composition is skewed to basic and acidic residues; that stretch reads PAERALRGRDPGALRPHDPAHRPLLRDPGPRRSE. Positions 269, 285, and 306 each coordinate ATP. Glu-306 is a Mn(2+) binding site. The N-linked (GlcNAc...) asparagine glycan is linked to Asn-335. Positions 354–565 are kinase domain; the sequence is FISPANNICF…AVRDCVERNG (212 aa). 2 disulfide bridges follow: Cys-362/Cys-378 and Cys-367/Cys-371. 389–392 provides a ligand contact to ATP; sequence AAFL. Disulfide bonds link Cys-426/Cys-500 and Cys-501/Cys-560. The active site involves Asp-458. Glu-463 contacts ATP. Asn-470 carries an N-linked (GlcNAc...) asparagine glycan. Asp-478 contacts ATP. Asp-478 contacts Mn(2+).

This sequence belongs to the FAM20 family. As to quaternary structure, homodimer; disulfide-linked. Interacts with FAM20A; probably forming a heterotetramer of 2 subunits of FAM20A and 2 subunits of FAM20C. Interacts with protease MBTPS1/S1P; the interaction results in FAM20C cleavage and secretion. Interacts with COPII components SEC23A and SEC24A; transport of FAM20C from the endoplasmic reticulum to the Golgi is likely to be mediated by COPII vesicles. Mn(2+) is required as a cofactor. Post-translationally, N-glycosylation is required for folding. In terms of processing, autophosphorylated. Propeptide cleavage by MBTPS1/S1P promotes FAM20C secretion and maximal kinase activity which is essential for efficient osteoblast differentiation and biomineralization. Widely expressed.

Its subcellular location is the golgi apparatus membrane. The protein resides in the secreted. It localises to the endoplasmic reticulum. The enzyme catalyses L-seryl-[protein] + ATP = O-phospho-L-seryl-[protein] + ADP + H(+). It carries out the reaction L-threonyl-[protein] + ATP = O-phospho-L-threonyl-[protein] + ADP + H(+). With respect to regulation, serine/threonine protein kinase activity is increased upon interaction with FAM20A. Golgi serine/threonine protein kinase that phosphorylates secretory pathway proteins within Ser-x-Glu/pSer motifs and plays a key role in biomineralization of bones and teeth. Constitutes the main protein kinase for extracellular proteins, generating the majority of the extracellular phosphoproteome. Mainly phosphorylates proteins within the Ser-x-Glu/pSer motif, but also displays a broader substrate specificity. Phosphorylates ERO1A, enhancing its activity which is required to maintain endoplasmic reticulum redox homeostasis and for oxidative protein folding. During endoplasmic reticulum stress, phosphorylates P4HB/PDIA1 which induces a functional switch, causing P4HB to change from an oxidoreductase to a molecular chaperone. This is critical to maintain ER proteostasis and reduce cell death under ER stress. Phosphorylation of P4HB also promotes its interaction with ERN1, leading to reduced activity of ERN1, a key sensor for the endoplasmic reticulum unfolded protein response. Required for osteoblast differentiation and mineralization. Phosphorylates casein as well as a number of proteins involved in biomineralization such as AMELX, AMTN, ENAM and SPP1/OPN. In addition to its role in biomineralization, also plays a role in lipid homeostasis, wound healing and cell migration and adhesion. This chain is Extracellular serine/threonine protein kinase FAM20C, found in Homo sapiens (Human).